The chain runs to 288 residues: Bifunctional protein FolD (288 aa).

Residues 166-168 (GAS) and Ile232 contribute to the NADP(+) site.

The protein belongs to the tetrahydrofolate dehydrogenase/cyclohydrolase family. In terms of assembly, homodimer.

The enzyme catalyses (6R)-5,10-methylene-5,6,7,8-tetrahydrofolate + NADP(+) = (6R)-5,10-methenyltetrahydrofolate + NADPH. It catalyses the reaction (6R)-5,10-methenyltetrahydrofolate + H2O = (6R)-10-formyltetrahydrofolate + H(+). It functions in the pathway one-carbon metabolism; tetrahydrofolate interconversion. In terms of biological role, catalyzes the oxidation of 5,10-methylenetetrahydrofolate to 5,10-methenyltetrahydrofolate and then the hydrolysis of 5,10-methenyltetrahydrofolate to 10-formyltetrahydrofolate. The chain is Bifunctional protein FolD from Yersinia pseudotuberculosis serotype O:1b (strain IP 31758).